We begin with the raw amino-acid sequence, 543 residues long: Zinc finger CCCH-type with G patch domain-containing protein (543 aa).

Disordered regions lie at residues Ala-55–Ile-79 and Thr-95–Asp-132. Low complexity predominate over residues Asp-65–Asp-76. Residues Asp-118–Leu-131 are compositionally biased toward acidic residues. The C3H1-type zinc finger occupies Pro-186–Val-209. Residues Pro-272–Ala-304 are disordered. The span at Leu-277 to Ala-304 shows a compositional bias: acidic residues. The region spanning Thr-335–Glu-381 is the G-patch domain. Residues Gly-438–Leu-460 are disordered.

Its subcellular location is the nucleus. Functionally, transcription repressor. The protein is Zinc finger CCCH-type with G patch domain-containing protein of Anopheles gambiae (African malaria mosquito).